Reading from the N-terminus, the 437-residue chain is Adenylosuccinate synthetase (437 aa).

GTP is bound by residues 25-31 (GDEGKGK), 53-55 (GHT), and Lys62. Asp26 serves as the catalytic Proton acceptor. 2 residues coordinate Mg(2+): Asp26 and Gly53. IMP-binding positions include 26 to 29 (DEGK) and 51 to 54 (NAGH). His54 (proton donor) is an active-site residue. Positions 141, 155, 232, and 247 each coordinate IMP. Thr307 contributes to the GTP binding site. Position 307 to 313 (307 to 313 (TTTKRPR)) interacts with substrate. Arg311 serves as a coordination point for IMP. GTP is bound by residues Arg313, 339-341 (KLD), and 425-427 (GVG).

It belongs to the adenylosuccinate synthetase family. Homodimer. It depends on Mg(2+) as a cofactor.

The protein resides in the cytoplasm. The catalysed reaction is IMP + L-aspartate + GTP = N(6)-(1,2-dicarboxyethyl)-AMP + GDP + phosphate + 2 H(+). It participates in purine metabolism; AMP biosynthesis via de novo pathway; AMP from IMP: step 1/2. Its function is as follows. Plays an important role in the salvage pathway for purine nucleotide biosynthesis. Catalyzes the first committed step in the biosynthesis of AMP from IMP. This Plasmodium knowlesi (strain H) protein is Adenylosuccinate synthetase.